A 180-amino-acid chain; its full sequence is Hypoxanthine-guanine phosphoribosyltransferase (180 aa).

The diphosphate site is built by K43 and G44. Residues E99 and D100 each coordinate Mg(2+). Residue D103 is the Proton acceptor of the active site. Residues K131, 152–153 (FI), and D159 contribute to the GMP site. R165 contributes to the diphosphate binding site.

It belongs to the purine/pyrimidine phosphoribosyltransferase family. Requires Mg(2+) as cofactor.

Its subcellular location is the cytoplasm. The enzyme catalyses IMP + diphosphate = hypoxanthine + 5-phospho-alpha-D-ribose 1-diphosphate. It catalyses the reaction GMP + diphosphate = guanine + 5-phospho-alpha-D-ribose 1-diphosphate. The protein operates within purine metabolism; IMP biosynthesis via salvage pathway; IMP from hypoxanthine: step 1/1. Its pathway is purine metabolism; GMP biosynthesis via salvage pathway; GMP from guanine: step 1/1. Purine salvage pathway enzyme that catalyzes the transfer of the ribosyl-5-phosphate group from 5-phospho-alpha-D-ribose 1-diphosphate (PRPP) to the N9 position of the 6-oxopurines hypoxanthine and guanine to form the corresponding ribonucleotides IMP (inosine 5'-monophosphate) and GMP (guanosine 5'-monophosphate), with the release of PPi. The chain is Hypoxanthine-guanine phosphoribosyltransferase (hpt) from Streptococcus thermophilus (strain CNRZ 1066).